Reading from the N-terminus, the 896-residue chain is Chromatin assembly factor 1 subunit A-A (896 aa).

Disordered stretches follow at residues 1 to 23, 185 to 377, and 552 to 610; these read MPGK…KKMV, TSTS…EEEK, and DSDE…DPEN. The span at 10-21 shows a compositional bias: polar residues; that stretch reads VMQSSTKSNTKK. A compositionally biased stretch (low complexity) spans 211–226; that stretch reads ASVSSSSSPVSLSSPD. A compositionally biased stretch (polar residues) spans 227 to 236; the sequence is AQTGSQFRNR. A compositionally biased stretch (low complexity) spans 237–246; it reads SSPSTSTTPT. The segment covering 255–284 has biased composition (basic and acidic residues); it reads SADKNKTKDKDKQRQAEKEERERAKKEARS. Residues 285 to 302 are compositionally biased toward basic residues; the sequence is AKKKKRQGLLKNLQRKRG. Basic and acidic residues predominate over residues 308–377; that stretch reads SGKEYKKEKK…EEKRLKEEEK (70 aa). Composition is skewed to acidic residues over residues 552 to 563, 572 to 586, and 595 to 607; these read DSDEEWEEEEPG, ENDD…DDDG, and SDDE…ECTD. Residues 642 to 678 are necessary for homodimerization, competence for chromatin assembly; it reads CVWWDSKASEISLLQKFSACILESPAVDEELAQEISS. The segment at 724–743 is disordered; sequence SDAAGNESTSPNVTPQTPSN. A compositionally biased stretch (polar residues) spans 729–743; it reads NESTSPNVTPQTPSN.

This sequence belongs to the CHAF1A family. Homodimer.

Its subcellular location is the nucleus. Functionally, involved in chromatin assembly in DNA replication and DNA repair. In Xenopus laevis (African clawed frog), this protein is Chromatin assembly factor 1 subunit A-A (chaf1a-a).